A 509-amino-acid polypeptide reads, in one-letter code: Maturase K (509 aa).

Belongs to the intron maturase 2 family. MatK subfamily.

It is found in the plastid. Its subcellular location is the chloroplast. In terms of biological role, usually encoded in the trnK tRNA gene intron. Probably assists in splicing its own and other chloroplast group II introns. The polypeptide is Maturase K (Thuja occidentalis (Northern white-cedar)).